We begin with the raw amino-acid sequence, 525 residues long: Neutrophil cytosol factor 2 (525 aa).

TPR repeat units lie at residues 37–70 (SRIC…DKHS), 71–104 (AVAY…LRGN), and 121–154 (CEVL…KSEP). Residue threonine 233 is modified to Phosphothreonine. The region spanning 240–299 (LEGEAHRVLFGFVPETPEELQVMPGNIVFVLKKGSDNWATVMFNGQKGLVPCNYLEPVEL) is the SH3 1 domain. Positions 304-343 (QSQPQEDTSPESDIPPPPNSSPPGRLQLSPGHKQKEPKEL) are disordered. Phosphoserine is present on residues serine 324 and serine 398. Residues 350–428 (PYMLKVHYKY…YCLTLWCEHT (79 aa)) form the PB1 domain. Residues 437 to 457 (EPIQRENSDASKQTTEPQPKE) form a disordered region. Positions 456 to 515 (KEGTQVVAIFSYEAAQPEDLEFVEGDVILVLSHVNEEWLEGECKGKVGIFPKAFVEGCAA) constitute an SH3 2 domain.

This sequence belongs to the NCF2/NOXA1 family. In terms of assembly, component of the phagocyte NADPH oxidase complex composed of an obligatory core heterodimer formed by the membrane proteins CYBA and CYBB and the cytosolic regulatory subunits NCF1/p47-phox, NCF2/p67-phox, NCF4/p40-phox and the small GTPase RAC1 or RAC2. Part of a cytosolic complex composed at least by NCF1, NCF2 and NCF4. Interacts with NCF4. Interacts (via the C-terminal SH3 domain) with NCF1 (via C-terminus). Interacts with SYTL1 and RAC1. May interact with NOXO1. Interacts with S100A8 and calprotectin (S100A8/9). Interacts with GBP7 (via GB1/RHD3-type G domain). Interacts with CYBB; the interaction is enhanced in the presence of GBP7.

Its subcellular location is the cytoplasm. NCF2, NCF1, and a membrane bound cytochrome b558 are required for activation of the latent NADPH oxidase (necessary for superoxide production). Its function is as follows. Subunit of the phagocyte NADPH oxidase complex that mediates the transfer of electrons from cytosolic NADPH to O2 to produce the superoxide anion (O2(-)). In the activated complex, electrons are first transferred from NADPH to flavin adenine dinucleotide (FAD) and subsequently transferred via two heme molecules to molecular oxygen, producing superoxide through an outer-sphere reaction. Activation of the NADPH oxidase complex is initiated by the assembly of cytosolic subunits of the NADPH oxidase complex with the core NADPH oxidase complex to form a complex at the plasma membrane or phagosomal membrane. This activation process is initiated by phosphorylation dependent binding of the cytosolic NCF1/p47-phox subunit to the C-terminus of CYBA/p22-phox. This is Neutrophil cytosol factor 2 from Mus musculus (Mouse).